Here is a 534-residue protein sequence, read N- to C-terminus: Nitrate/nitrite transporter NrtP (534 aa).

The next 12 helical transmembrane spans lie at 19–39 (WFAF…ATTI), 52–72 (TIGL…GMLL), 79–99 (LTYS…ATAQ), 109–129 (LLMG…AEWF), 150–170 (AFSA…PGAF), 195–215 (AAIA…YFSV), 240–260 (DFWF…VLAW), 266–286 (NFLN…LYLF), 382–404 (WTMV…VAGT), 409–431 (IAVL…TFAI), 445–465 (GNVG…LLLL), and 485–505 (GFFQ…AFFL).

It belongs to the major facilitator superfamily. Nitrate/nitrite porter (TC 2.A.1.8) family.

It is found in the cell inner membrane. In terms of biological role, high-efficiency transport system for both nitrate and nitrite. This chain is Nitrate/nitrite transporter NrtP, found in Picosynechococcus sp. (strain ATCC 27264 / PCC 7002 / PR-6) (Agmenellum quadruplicatum).